Here is a 355-residue protein sequence, read N- to C-terminus: Adenine deaminase (355 aa).

Zn(2+)-binding residues include His-23, His-25, and His-211. Glu-214 functions as the Proton donor in the catalytic mechanism. Asp-292 provides a ligand contact to Zn(2+). Asp-293 contacts substrate.

Belongs to the metallo-dependent hydrolases superfamily. Adenosine and AMP deaminases family. Adenine deaminase type 2 subfamily. Zn(2+) is required as a cofactor.

Its subcellular location is the cytoplasm. It localises to the nucleus. The catalysed reaction is adenine + H2O + H(+) = hypoxanthine + NH4(+). Catalyzes the hydrolytic deamination of adenine to hypoxanthine. Plays an important role in the purine salvage pathway and in nitrogen catabolism. The chain is Adenine deaminase from Kluyveromyces lactis (strain ATCC 8585 / CBS 2359 / DSM 70799 / NBRC 1267 / NRRL Y-1140 / WM37) (Yeast).